A 733-amino-acid polypeptide reads, in one-letter code: Alpha-galactosidase 1 (733 aa).

The Nucleophile role is filled by Asp480. Asp550 serves as the catalytic Proton donor.

This sequence belongs to the glycosyl hydrolase 36 family.

It carries out the reaction Hydrolysis of terminal, non-reducing alpha-D-galactose residues in alpha-D-galactosides, including galactose oligosaccharides, galactomannans and galactolipids.. Alpha-galactosidase associated with the raffinose operon. The protein is Alpha-galactosidase 1 (agaR) of Pediococcus pentosaceus.